We begin with the raw amino-acid sequence, 379 residues long: Odorant receptor 33b (379 aa).

Residues 1-37 lie on the Cytoplasmic side of the membrane; sequence MDLKPRVIRSEDIYRTYWLYWHLLGLESNFFLNRLLD. A helical membrane pass occupies residues 38–58; the sequence is LVITIFVTIWYPIHLILGLFM. Residues 59-64 lie on the Extracellular side of the membrane; it reads ERSLGD. A helical transmembrane segment spans residues 65 to 85; it reads VCKGLPITAACFFASFKFICF. Over 86-129 the chain is Cytoplasmic; the sequence is RFKLSEIKEIEILFKELDQRALSREECEFFNQNTRREANFIWKS. The chain crosses the membrane as a helical span at residues 130 to 150; the sequence is FIVAYGLSNISAIASVLFGGG. Residues 151-165 lie on the Extracellular side of the membrane; it reads HKLLYPAWFPYDVQA. The chain crosses the membrane as a helical span at residues 166-186; that stretch reads TELIFWLSVTYQIAGVSLAIL. The Cytoplasmic segment spans residues 187 to 256; it reads QNLANDSYPP…LLRSTMNISQ (70 aa). A helical membrane pass occupies residues 257–277; sequence LGQFISSGVNISITLVNILFF. At 278-281 the chain is on the extracellular side; the sequence is ADNN. Residues 282-302 traverse the membrane as a helical segment; that stretch reads FAITYYGVYFLSMVLELFPCC. Residues 303 to 355 are Cytoplasmic-facing; sequence YYGTLISVEMNQLTYAIYSSNWMSMNRSYSRILLIFMQLTLAEVQIKAGGMIG. The helical transmembrane segment at 356 to 376 threads the bilayer; that stretch reads IGMNAFFATVRLAYSFFTLAM. Residues 377-379 are Extracellular-facing; sequence SLR.

The protein belongs to the insect chemoreceptor superfamily. Heteromeric odorant receptor channel (TC 1.A.69) family. Or2a subfamily. Interacts with Orco. Complexes exist early in the endomembrane system in olfactory sensory neurons (OSNs), coupling these complexes to the conserved ciliary trafficking pathway. As to expression, expressed in 15 cells in the antenna but not the maxillary palp.

The protein resides in the cell membrane. Odorant receptor which mediates acceptance or avoidance behavior, depending on its substrates. The odorant receptor repertoire encodes a large collection of odor stimuli that vary widely in identity, intensity, and duration. May form a complex with Orco to form odorant-sensing units, providing sensitive and prolonged odorant signaling and calcium permeability. Involved in the behavioral responses to pentyl acetate and pyrazines. This Drosophila melanogaster (Fruit fly) protein is Odorant receptor 33b (Or33b).